The sequence spans 165 residues: Large ribosomal subunit protein uL10 (165 aa).

2 positions are modified to N6-acetyllysine: Lys-37 and Lys-105.

The protein belongs to the universal ribosomal protein uL10 family. Part of the ribosomal stalk of the 50S ribosomal subunit. The N-terminus interacts with L11 and the large rRNA to form the base of the stalk. The C-terminus forms an elongated spine to which L12 dimers bind in a sequential fashion forming a multimeric L10(L12)X complex.

Protein L10 is also a translational repressor protein. It controls the translation of the rplJL-rpoBC operon by binding to its mRNA. Functionally, forms part of the ribosomal stalk, playing a central role in the interaction of the ribosome with GTP-bound translation factors. The polypeptide is Large ribosomal subunit protein uL10 (rplJ) (Escherichia coli O6:H1 (strain CFT073 / ATCC 700928 / UPEC)).